Consider the following 671-residue polypeptide: Fusexin 1 (671 aa).

At 1–12 (MRAVSDFLKNKW) the chain is on the cytoplasmic side. Residues 13 to 33 (VAVPAVALLILSLGFLAQNYI) traverse the membrane as a helical segment. The Extracellular segment spans residues 34 to 574 (TGSFVSGDQI…DPFCADGPLE (541 aa)). 4 cysteine pairs are disulfide-bonded: Cys-145-Cys-180, Cys-409-Cys-452, Cys-480-Cys-500, and Cys-513-Cys-528. Residues 168–173 (GAIADY) are fusion loop. A helical membrane pass occupies residues 575–595 (MLSKMFHLVAGTAVAFFTGSL). Over 596–628 (GYRAGRWVDGEYQIKGGFDPLKSRSVSRAKRGR) the chain is Cytoplasmic. A helical transmembrane segment spans residues 629–649 (FLIGLIAELVSFLLGFYVILL). Residue Val-650 is a topological domain, extracellular. The chain crosses the membrane as a helical span at residues 651–671 (PIWAQLMVILGYVLFKYYTPF).

It belongs to the HAP2/GCS1 family. Fusexin 1 subfamily. In terms of assembly, homotrimer stabilized by interdomain contacts and numerous Ca(2+) and Na(+) ions.

The protein resides in the cell surface. It is found in the cell membrane. Its function is as follows. Exhibits fusogenic activity. Mediates cell-cell fusion in mammalian cells (bilateral fusion). The chain is Fusexin 1 from Natrinema altunense (strain JCM 12890 / CGMCC 1.3731 / AJ2).